The chain runs to 803 residues: Bromodomain-containing protein 2 (803 aa).

Methionine 1 bears the N-acetylmethionine mark. Residues methionine 1–alanine 28 are disordered. A Phosphothreonine modification is found at threonine 6. A Phosphoserine modification is found at serine 37. Positions alanine 53 to glycine 73 are disordered. The Bromo 1 domain maps to arginine 74–methionine 180. Aspartate 112, tyrosine 155, asparagine 156, lysine 157, aspartate 160, and aspartate 161 together coordinate a protein. Disordered regions lie at residues proline 268–glutamine 349, glutamate 456–serine 653, and glutamate 739–glycine 803. Over residues threonine 285 to serine 298 the composition is skewed to low complexity. Phosphoserine is present on residues serine 298, serine 301, and serine 305. Basic and acidic residues predominate over residues methionine 316–proline 332. The Bromo 2 domain maps to glycine 344 to methionine 453. Residues serine 481–glutamate 515 show a composition bias toward acidic residues. The span at lysine 545–arginine 567 shows a compositional bias: basic residues. Residues lysine 556 to lysine 560 carry the Nuclear localization signal motif. The region spanning aspartate 634–proline 716 is the NET domain. Position 635 is a phosphoserine (serine 635). A compositionally biased stretch (basic and acidic residues) spans serine 641–leucine 652. The span at serine 777–threonine 797 shows a compositional bias: low complexity.

Belongs to the BET family. In terms of assembly, homodimer. Interacts with E2F1. Interacts with (acetylated) STAT3; promoting STAT3 recruitment to chromatin. Interacts with CTCF; promoting BRD2 recruitment to chromatin.

The protein resides in the nucleus. The protein localises to the chromosome. Chromatin reader protein that specifically recognizes and binds histone H4 acetylated at 'Lys-5' and 'Lys-12' (H4K5ac and H4K12ac, respectively), thereby controlling gene expression and remodeling chromatin structures. Recruits transcription factors and coactivators to target gene sites, and activates RNA polymerase II machinery for transcriptional elongation. Plays a key role in genome compartmentalization via its association with CTCF and cohesin: recruited to chromatin by CTCF and promotes formation of topologically associating domains (TADs) via its ability to bind acetylated histones, contributing to CTCF boundary formation and enhancer insulation. Also recognizes and binds acetylated non-histone proteins, such as STAT3. Involved in inflammatory response by regulating differentiation of naive CD4(+) T-cells into T-helper Th17: recognizes and binds STAT3 acetylated at 'Lys-87', promoting STAT3 recruitment to chromatin. In addition to acetylated lysines, also recognizes and binds lysine residues on histones that are both methylated and acetylated on the same side chain to form N6-acetyl-N6-methyllysine (Kacme), an epigenetic mark of active chromatin associated with increased transcriptional initiation. Specifically binds histone H4 acetyl-methylated at 'Lys-5' and 'Lys-12' (H4K5acme and H4K12acme, respectively). This is Bromodomain-containing protein 2 (BRD2) from Canis lupus familiaris (Dog).